The sequence spans 739 residues: Polyribonucleotide nucleotidyltransferase (739 aa).

Residues Asp-487 and Asp-493 each coordinate Mg(2+). The 60-residue stretch at 554–613 (PRIETMQIPTDKIRDVIGTGGKVIREIVEKTGAKINIEDTGVVKIASADGKAIKAAYNWI) folds into the KH domain. An S1 motif domain is found at 623–691 (GVIYDGTIVK…DRGKIRLSMK (69 aa)). A disordered region spans residues 694–739 (DQQTGEDITDKIKAQRDAERAERGDEPREPREGGRHRGERRREAGE). Residues 701–739 (ITDKIKAQRDAERAERGDEPREPREGGRHRGERRREAGE) show a composition bias toward basic and acidic residues.

It belongs to the polyribonucleotide nucleotidyltransferase family. The cofactor is Mg(2+).

The protein localises to the cytoplasm. It carries out the reaction RNA(n+1) + phosphate = RNA(n) + a ribonucleoside 5'-diphosphate. Involved in mRNA degradation. Catalyzes the phosphorolysis of single-stranded polyribonucleotides processively in the 3'- to 5'-direction. In Methylobacterium radiotolerans (strain ATCC 27329 / DSM 1819 / JCM 2831 / NBRC 15690 / NCIMB 10815 / 0-1), this protein is Polyribonucleotide nucleotidyltransferase.